A 1177-amino-acid polypeptide reads, in one-letter code: DNA-directed RNA polymerase subunit beta (1177 aa).

Residues 1154–1177 (RDTEDDDDHQSADKLNVEVETTKE) are disordered. The span at 1162-1177 (HQSADKLNVEVETTKE) shows a compositional bias: basic and acidic residues.

It belongs to the RNA polymerase beta chain family. In terms of assembly, the RNAP catalytic core consists of 2 alpha, 1 beta, 1 beta' and 1 omega subunit. When a sigma factor is associated with the core the holoenzyme is formed, which can initiate transcription.

It catalyses the reaction RNA(n) + a ribonucleoside 5'-triphosphate = RNA(n+1) + diphosphate. Its function is as follows. DNA-dependent RNA polymerase catalyzes the transcription of DNA into RNA using the four ribonucleoside triphosphates as substrates. This chain is DNA-directed RNA polymerase subunit beta, found in Bacillus mycoides (strain KBAB4) (Bacillus weihenstephanensis).